A 542-amino-acid polypeptide reads, in one-letter code: CTP synthase (542 aa).

Residues 1-265 (MARYVFITGG…DDEVLAAFGI (265 aa)) are amidoligase domain. Serine 13 contacts CTP. Serine 13 provides a ligand contact to UTP. Residues 14-19 (SLGKGI) and aspartate 71 each bind ATP. 2 residues coordinate Mg(2+): aspartate 71 and glutamate 139. Residues 146–148 (DIE), 186–191 (KTKPTQ), and lysine 222 each bind CTP. UTP-binding positions include 186 to 191 (KTKPTQ) and lysine 222. The region spanning 291 to 541 (TIAIVGKYTG…IEAATEQSRL (251 aa)) is the Glutamine amidotransferase type-1 domain. Glycine 353 serves as a coordination point for L-glutamine. Cysteine 380 acts as the Nucleophile; for glutamine hydrolysis in catalysis. L-glutamine contacts are provided by residues 381–384 (FGMQ), glutamate 404, and arginine 469. Residues histidine 514 and glutamate 516 contribute to the active site.

The protein belongs to the CTP synthase family. As to quaternary structure, homotetramer.

The catalysed reaction is UTP + L-glutamine + ATP + H2O = CTP + L-glutamate + ADP + phosphate + 2 H(+). The enzyme catalyses L-glutamine + H2O = L-glutamate + NH4(+). It catalyses the reaction UTP + NH4(+) + ATP = CTP + ADP + phosphate + 2 H(+). The protein operates within pyrimidine metabolism; CTP biosynthesis via de novo pathway; CTP from UDP: step 2/2. Allosterically activated by GTP, when glutamine is the substrate; GTP has no effect on the reaction when ammonia is the substrate. The allosteric effector GTP functions by stabilizing the protein conformation that binds the tetrahedral intermediate(s) formed during glutamine hydrolysis. Inhibited by the product CTP, via allosteric rather than competitive inhibition. In terms of biological role, catalyzes the ATP-dependent amination of UTP to CTP with either L-glutamine or ammonia as the source of nitrogen. Regulates intracellular CTP levels through interactions with the four ribonucleotide triphosphates. The protein is CTP synthase of Rhizobium etli (strain CIAT 652).